A 665-amino-acid polypeptide reads, in one-letter code: Pre-mRNA-processing factor 39 (665 aa).

A compositionally biased stretch (basic and acidic residues) spans 1–11 (MQNSHMEEYRN). Positions 1–28 (MQNSHMEEYRNSDNGSTGNSSEVAVVEH) are disordered. Residues 12-22 (SDNGSTGNSSE) show a composition bias toward polar residues. Phosphoserine is present on S44. 7 HAT repeats span residues 107-139 (NHLM…LEKR), 141-173 (DNIK…FLKE), 181-216 (ETNT…WENE), 218-251 (GNLR…HVQN), 331-363 (FEEG…FEIE), 365-397 (GTHE…YMEN), and 402-434 (GVRH…QQGN). Positions 599–622 (QDTLKRKAENGSEEPEEKKAHTED) are enriched in basic and acidic residues. A disordered region spans residues 599-625 (QDTLKRKAENGSEEPEEKKAHTEDLSS).

This sequence belongs to the PRP39 family.

Its subcellular location is the nucleus. Involved in pre-mRNA splicing. This is Pre-mRNA-processing factor 39 (Prpf39) from Mus musculus (Mouse).